Reading from the N-terminus, the 645-residue chain is MSIHITFPDGAVKPFDSGITTFDVAKSISNSLAKKALAGKFNGVLIDLDRPIVEDGSLEIVTPDHEDALGILRHSSAHLMANALRRLFPNIKFGVGPAIDSGFYYDTDNGESPVTAEDLPAIEAEMMKIVKENNPIVRKEISRAEALELFADDPYKVELITDLPEDEIITVYDQGDFVDLCRGVHVPSTGRIQVFKLLSVAGAYWRGNSDNHMMQRIYGTAFFDKKDLKEFIKMREEAKERDHRKLGKELDLFMVSQEVGSGLPFWLPKGATIRRTIERYIVDKEISLGYQHVYTPIMADVELYKTSGHWDHYHEDMFPPMDMGDGEMLVLRPMNCPHHMMVYKNDIHSYRELPIRIAELGMMHRYEKSGALSGLQRVREMTLNDGHTFVRPDQIKDEFKRTLELMVAVYADFNITDYRFRLSYRDPNNTDKYFDDDAMWEKAQAMLKAAMDELELDYFEAEGEAAFYGPKLDVQVKTALGMEETLSTIQLDFLLPERFDLTYVGEDGENTHRPVVIHRGIVSTMERFVAYLTEVYKGAFPTWLAPIQATIIPVSVEAHSEYAYEIKERLQAQGLRVEVDDRNEKMGYKIRASQTQKVPYQLVVGDKEMEDATVNVRRYGSKETSVEDLSIFIDSMAAEVHNYSR.

The TGS domain maps to 1–62; the sequence is MSIHITFPDG…VEDGSLEIVT (62 aa). The catalytic stretch occupies residues 242 to 541; the sequence is DHRKLGKELD…LTEVYKGAFP (300 aa). Zn(2+)-binding residues include C336, H387, and H518.

The protein belongs to the class-II aminoacyl-tRNA synthetase family. As to quaternary structure, homodimer. The cofactor is Zn(2+).

It localises to the cytoplasm. The catalysed reaction is tRNA(Thr) + L-threonine + ATP = L-threonyl-tRNA(Thr) + AMP + diphosphate + H(+). Its function is as follows. Catalyzes the attachment of threonine to tRNA(Thr) in a two-step reaction: L-threonine is first activated by ATP to form Thr-AMP and then transferred to the acceptor end of tRNA(Thr). Also edits incorrectly charged L-seryl-tRNA(Thr). The sequence is that of Threonine--tRNA ligase from Enterococcus faecalis (strain ATCC 700802 / V583).